Reading from the N-terminus, the 156-residue chain is Peptide deformylase 1 (156 aa).

Positions 90 and 132 each coordinate Fe cation. E133 is a catalytic residue. Position 136 (H136) interacts with Fe cation.

The protein belongs to the polypeptide deformylase family. Fe(2+) serves as cofactor.

The enzyme catalyses N-terminal N-formyl-L-methionyl-[peptide] + H2O = N-terminal L-methionyl-[peptide] + formate. In terms of biological role, removes the formyl group from the N-terminal Met of newly synthesized proteins. Requires at least a dipeptide for an efficient rate of reaction. N-terminal L-methionine is a prerequisite for activity but the enzyme has broad specificity at other positions. This Bacillus cereus (strain ATCC 14579 / DSM 31 / CCUG 7414 / JCM 2152 / NBRC 15305 / NCIMB 9373 / NCTC 2599 / NRRL B-3711) protein is Peptide deformylase 1.